A 171-amino-acid chain; its full sequence is Endoribonuclease YbeY (171 aa).

His-130, His-134, and His-140 together coordinate Zn(2+).

The protein belongs to the endoribonuclease YbeY family. It depends on Zn(2+) as a cofactor.

It is found in the cytoplasm. Functionally, single strand-specific metallo-endoribonuclease involved in late-stage 70S ribosome quality control and in maturation of the 3' terminus of the 16S rRNA. The polypeptide is Endoribonuclease YbeY (Neisseria meningitidis serogroup C / serotype 2a (strain ATCC 700532 / DSM 15464 / FAM18)).